We begin with the raw amino-acid sequence, 239 residues long: Uridylate kinase (239 aa).

12–15 provides a ligand contact to ATP; sequence KLSG. Residues 20–25 are involved in allosteric activation by GTP; that stretch reads GEKGFG. Position 54 (G54) interacts with UMP. G55 and R59 together coordinate ATP. UMP is bound by residues D72 and 133-140; that span reads TGNPFFST. The ATP site is built by Y166 and D169.

It belongs to the UMP kinase family. As to quaternary structure, homohexamer.

It localises to the cytoplasm. It carries out the reaction UMP + ATP = UDP + ADP. It participates in pyrimidine metabolism; CTP biosynthesis via de novo pathway; UDP from UMP (UMPK route): step 1/1. Allosterically activated by GTP. Inhibited by UTP. In terms of biological role, catalyzes the reversible phosphorylation of UMP to UDP. This Caldicellulosiruptor saccharolyticus (strain ATCC 43494 / DSM 8903 / Tp8T 6331) protein is Uridylate kinase.